A 342-amino-acid chain; its full sequence is Large ribosomal subunit protein uL3 (342 aa).

Residues 1–22 are disordered; that stretch reads MGHRKLSSPRRGSAGLRPRKRA.

Belongs to the universal ribosomal protein uL3 family. In terms of assembly, part of the 50S ribosomal subunit. Forms a cluster with proteins L14 and L24e.

In terms of biological role, one of the primary rRNA binding proteins, it binds directly near the 3'-end of the 23S rRNA, where it nucleates assembly of the 50S subunit. This is Large ribosomal subunit protein uL3 from Sulfolobus acidocaldarius (strain ATCC 33909 / DSM 639 / JCM 8929 / NBRC 15157 / NCIMB 11770).